Reading from the N-terminus, the 771-residue chain is DnaJ homolog subfamily C member 16 (771 aa).

The N-terminal stretch at 1–25 (MELKRLSISWQFLIVLVLILQSLSA) is a signal peptide. At 26–532 (LDFDPYRVLG…ESLLHSNWRE (507 aa)) the chain is on the cytoplasmic side. Positions 29 to 93 (DPYRVLGVSR…EKRTNYDHYG (65 aa)) constitute a J domain. Residues 116–244 (FYFDESFFHF…LRQFVESLLP (129 aa)) form the Thioredoxin domain. The chain crosses the membrane as a helical; Anchor for type IV membrane protein span at residues 533–553 (MMPLLSLIFSALFILFGTVIV). The Extracellular segment spans residues 554–771 (QAFSDSNEER…FYIPSWPELD (218 aa)). The segment at 559–590 (SNEERESHPPDKEEVPEKAGKTEPSFTKESSS) is disordered. The span at 560-579 (NEERESHPPDKEEVPEKAGK) shows a compositional bias: basic and acidic residues. An N-linked (GlcNAc...) asparagine glycan is attached at Asn-628.

The protein localises to the endoplasmic reticulum membrane. In terms of biological role, plays an important role in regulating the size of autophagosomes during the formation process. The chain is DnaJ homolog subfamily C member 16 (Dnajc16) from Rattus norvegicus (Rat).